We begin with the raw amino-acid sequence, 423 residues long: ATP-citrate synthase alpha chain protein 1 (423 aa).

Citrate contacts are provided by asparagine 343, threonine 345, and arginine 376.

It belongs to the succinate/malate CoA ligase beta subunit family. In terms of assembly, heterooctamer of 4 alpha and 4 beta chains. Expressed in trichomes, epidermal leaf cells, anther tapetal cells, stigma and in young vascular bundles of expanding leaves, cotyledons, roots, pedicel of flowers and siliques.

It is found in the cytoplasm. The protein resides in the cytosol. It catalyses the reaction oxaloacetate + acetyl-CoA + ADP + phosphate = citrate + ATP + CoA. Its function is as follows. ATP citrate-lyase is the primary enzyme responsible for the synthesis of cytosolic acetyl-CoA, used for the elongation of fatty acids and biosynthesis of isoprenoids, flavonoids and malonated derivatives. May supply substrate to the cytosolic acetyl-CoA carboxylase, which generates the malonyl-CoA used for the synthesis of a multitude of compounds, including very long chain fatty acids and flavonoids. Required for normal growth and development and elongation of C18 fatty acids to C20 to C24 fatty acids in seeds. In contrast to all known animal ACL enzymes having a homomeric structure, plant ACLs are composed of alpha and beta chains. The protein is ATP-citrate synthase alpha chain protein 1 (ACLA-1) of Arabidopsis thaliana (Mouse-ear cress).